The following is a 150-amino-acid chain: 3-hydroxyacyl-[acyl-carrier-protein] dehydratase FabZ (150 aa).

The active site involves histidine 52.

Belongs to the thioester dehydratase family. FabZ subfamily.

It localises to the cytoplasm. The enzyme catalyses a (3R)-hydroxyacyl-[ACP] = a (2E)-enoyl-[ACP] + H2O. Functionally, involved in unsaturated fatty acids biosynthesis. Catalyzes the dehydration of short chain beta-hydroxyacyl-ACPs and long chain saturated and unsaturated beta-hydroxyacyl-ACPs. In Cupriavidus metallidurans (strain ATCC 43123 / DSM 2839 / NBRC 102507 / CH34) (Ralstonia metallidurans), this protein is 3-hydroxyacyl-[acyl-carrier-protein] dehydratase FabZ.